We begin with the raw amino-acid sequence, 256 residues long: Imidazole glycerol phosphate synthase subunit HisF (256 aa).

Active-site residues include Asp-11 and Asp-130.

Belongs to the HisA/HisF family. In terms of assembly, heterodimer of HisH and HisF.

The protein resides in the cytoplasm. The catalysed reaction is 5-[(5-phospho-1-deoxy-D-ribulos-1-ylimino)methylamino]-1-(5-phospho-beta-D-ribosyl)imidazole-4-carboxamide + L-glutamine = D-erythro-1-(imidazol-4-yl)glycerol 3-phosphate + 5-amino-1-(5-phospho-beta-D-ribosyl)imidazole-4-carboxamide + L-glutamate + H(+). It participates in amino-acid biosynthesis; L-histidine biosynthesis; L-histidine from 5-phospho-alpha-D-ribose 1-diphosphate: step 5/9. Its function is as follows. IGPS catalyzes the conversion of PRFAR and glutamine to IGP, AICAR and glutamate. The HisF subunit catalyzes the cyclization activity that produces IGP and AICAR from PRFAR using the ammonia provided by the HisH subunit. This Methylocella silvestris (strain DSM 15510 / CIP 108128 / LMG 27833 / NCIMB 13906 / BL2) protein is Imidazole glycerol phosphate synthase subunit HisF.